A 283-amino-acid polypeptide reads, in one-letter code: 4-diphosphocytidyl-2-C-methyl-D-erythritol kinase (283 aa).

The active site involves Lys10. 94–104 serves as a coordination point for ATP; the sequence is PVAAGLAGGSS. Residue Asp136 is part of the active site.

Belongs to the GHMP kinase family. IspE subfamily.

It carries out the reaction 4-CDP-2-C-methyl-D-erythritol + ATP = 4-CDP-2-C-methyl-D-erythritol 2-phosphate + ADP + H(+). Its pathway is isoprenoid biosynthesis; isopentenyl diphosphate biosynthesis via DXP pathway; isopentenyl diphosphate from 1-deoxy-D-xylulose 5-phosphate: step 3/6. Its function is as follows. Catalyzes the phosphorylation of the position 2 hydroxy group of 4-diphosphocytidyl-2C-methyl-D-erythritol. This Enterococcus faecalis (strain ATCC 700802 / V583) protein is 4-diphosphocytidyl-2-C-methyl-D-erythritol kinase.